The following is a 469-amino-acid chain: Mitochondrial adenyl nucleotide antiporter SLC25A25 (469 aa).

Positions 1-165 (MLCLCLYVPI…LYWKHSTIFD (165 aa)) are regulatory N-terminal domain. Over 1–189 (MLCLCLYVPI…ERQTGMWWRH (189 aa)) the chain is Mitochondrial intermembrane. 3 consecutive EF-hand domains span residues 47-80 (TYRQ…QDHE), 78-113 (DHEK…LGVK), and 114-149 (ISEQ…HPVE). Aspartate 60, aspartate 62, aspartate 64, glutamine 66, and glutamate 71 together coordinate Ca(2+). The linker region stretch occupies residues 151-160 (IPEIILYWKH). The tract at residues 166–469 (VGENLTVPDE…LKITLGVQSR (304 aa)) is C-terminal transmembrane transporter domain. 3 Solcar repeats span residues 184 to 270 (GMWW…MKRL), 278 to 363 (LRIH…LKNT), and 375 to 463 (PGVF…LKIT). A helical membrane pass occupies residues 190–207 (LVAGGGAGAVSRTCTAPL). Residues 208–244 (DRLKVLMQVHASRSNNMCIIGGFTQMIREGGAKSLWR) are Mitochondrial matrix-facing. Residues 245-264 (GNGINVLKIAPESAIKFMAY) traverse the membrane as a helical segment. The Mitochondrial intermembrane portion of the chain corresponds to 265 to 287 (EQMKRLVGSDQETLRIHERLVAG). The helical transmembrane segment at 288–301 (SLAGAIAQSSIYPM) threads the bilayer. Residues 302 to 337 (EVLKTRMALRKTGQYSGMLDCAKRILAKEGVAAFYK) are Mitochondrial matrix-facing. The chain crosses the membrane as a helical span at residues 338-357 (GYIPNMLGIIPYAGIDLAVY). Residues 358–380 (ETLKNTWLQRYAVNSADPGVFVL) are Mitochondrial intermembrane-facing. A helical membrane pass occupies residues 381–398 (LACGTISSTCGQLASYPL). The Mitochondrial matrix portion of the chain corresponds to 399 to 437 (ALVRTRMQAQASIEGAPEVTMSSLFKQILRTEGAFGLYR). The helical transmembrane segment at 438–457 (GLAPNFMKVIPAVSISYVVY) threads the bilayer. At 458 to 469 (ENLKITLGVQSR) the chain is on the mitochondrial intermembrane side.

The protein belongs to the mitochondrial carrier (TC 2.A.29) family. Mainly present in the liver and the skeletal muscle (at protein level).

The protein resides in the mitochondrion inner membrane. It catalyses the reaction Mg(2+)(out) + phosphate(in) + ATP(out) = Mg(2+)(in) + phosphate(out) + ATP(in). Activated by an increase in cytosolic calcium levels that induce a conformational change of the N-terminal regulatory domain, uncapping the channel and allowing transport. Functionally, electroneutral antiporter that most probably mediates the transport of adenyl nucleotides through the inner mitochondrial membrane. Originally identified as an ATP-magnesium/inorganic phosphate antiporter, it could have a broader specificity for adenyl nucleotides. By regulating the mitochondrial matrix adenyl nucleotide pool could adapt to changing cellular energetic demands and indirectly regulate adenyl nucleotide-dependent metabolic pathways. In Rattus norvegicus (Rat), this protein is Mitochondrial adenyl nucleotide antiporter SLC25A25.